The following is a 426-amino-acid chain: Putative glutamate--cysteine ligase 2 (426 aa).

It belongs to the glutamate--cysteine ligase type 2 family. YbdK subfamily.

It carries out the reaction L-cysteine + L-glutamate + ATP = gamma-L-glutamyl-L-cysteine + ADP + phosphate + H(+). Functionally, ATP-dependent carboxylate-amine ligase which exhibits weak glutamate--cysteine ligase activity. The chain is Putative glutamate--cysteine ligase 2 from Bradyrhizobium diazoefficiens (strain JCM 10833 / BCRC 13528 / IAM 13628 / NBRC 14792 / USDA 110).